The sequence spans 342 residues: Ribosomal RNA small subunit methyltransferase C (342 aa).

The protein belongs to the methyltransferase superfamily. RsmC family. In terms of assembly, monomer.

The protein localises to the cytoplasm. It carries out the reaction guanosine(1207) in 16S rRNA + S-adenosyl-L-methionine = N(2)-methylguanosine(1207) in 16S rRNA + S-adenosyl-L-homocysteine + H(+). Its function is as follows. Specifically methylates the guanine in position 1207 of 16S rRNA in the 30S particle. The polypeptide is Ribosomal RNA small subunit methyltransferase C (Shewanella oneidensis (strain ATCC 700550 / JCM 31522 / CIP 106686 / LMG 19005 / NCIMB 14063 / MR-1)).